We begin with the raw amino-acid sequence, 123 residues long: Zinc metalloproteinase-disintegrin-like jerdohagin (123 aa).

Residues 6–52 (RYLYIRHDREACTCHANSCIMSAYFSNSHVQYENYINDCKPQCILNE) enclose the Peptidase M12B domain. Position 12 (histidine 12) interacts with Zn(2+). Cysteine 19 and cysteine 24 are joined by a disulfide. Cysteine 48 and asparagine 51 together coordinate Ca(2+). The Disintegrin domain occupies 53–80 (LHSWVECESGECCEQCRSECDIAESCTN). 4 cysteine pairs are disulfide-bonded: cysteine 59–cysteine 65, cysteine 64–cysteine 78, cysteine 72–cysteine 90, and cysteine 106–cysteine 116. The D/ECD-tripeptide signature appears at 71–73 (ECD).

This sequence belongs to the venom metalloproteinase (M12B) family. P-III subfamily. P-IIIa sub-subfamily. As to quaternary structure, monomer. Requires Zn(2+) as cofactor. The N-terminus is blocked. Expressed by the venom gland.

Its subcellular location is the secreted. With respect to regulation, its proteolytic and hemorrhagic activities are inhibited by EDTA, but not by PMSF. Functionally, snake venom metalloproteinase that has high hemorrhagic activity and degrades the alpha-chain of fibrinogen (FGA), leaving the beta- and the gamma-chain intact. It may also inhibit platelet aggregation. Cleaves insulin B chain at '25-Phe-|-Val-26', '26-Val-|-Asn-27', '29-His-|-Leu-30', '30-Leu-|-Cys-31', '33-Ser-|-His-34', '35-Leu-|-Val-36', '40-Tyr-|-Leu-41', '41-Leu-|-Val-42', '42-Val-|-Cys-43', '43-Cys-|-Gly-44', '44-Gly-|-Glu-45', '46-Arg-|-Gly-47', '47-Gly-|-Phe-48', '49-Phe-|-Tyr-50' and '52-Pro-|-Lys-53' bonds. Also cleaves human prothrombin (72 kDa) and activation fragment F1 (27 kDa) of activated human prothrombin, to generate two new proteins of 68 and 23 kDa. This Protobothrops jerdonii (Jerdon's pitviper) protein is Zinc metalloproteinase-disintegrin-like jerdohagin.